Here is a 378-residue protein sequence, read N- to C-terminus: 23S rRNA (uracil(747)-C(5))-methyltransferase RlmC (378 aa).

The [4Fe-4S] cluster site is built by cysteine 3, cysteine 11, cysteine 14, and cysteine 87. Glutamine 212, phenylalanine 241, glutamate 262, and asparagine 309 together coordinate S-adenosyl-L-methionine. Cysteine 336 (nucleophile) is an active-site residue.

The protein belongs to the class I-like SAM-binding methyltransferase superfamily. RNA M5U methyltransferase family. RlmC subfamily.

The catalysed reaction is uridine(747) in 23S rRNA + S-adenosyl-L-methionine = 5-methyluridine(747) in 23S rRNA + S-adenosyl-L-homocysteine + H(+). Its function is as follows. Catalyzes the formation of 5-methyl-uridine at position 747 (m5U747) in 23S rRNA. This is 23S rRNA (uracil(747)-C(5))-methyltransferase RlmC from Shewanella pealeana (strain ATCC 700345 / ANG-SQ1).